The chain runs to 399 residues: S-adenosylmethionine synthase (399 aa).

His-17 provides a ligand contact to ATP. Asp-19 is a Mg(2+) binding site. Glu-45 is a K(+) binding site. Positions 58 and 101 each coordinate L-methionine. Residues 101-111 (QSADIAMGVDQ) form a flexible loop region. Residues 177–179 (DGK), 244–245 (RF), Asp-253, 259–260 (RK), Ala-276, and Lys-280 contribute to the ATP site. Asp-253 lines the L-methionine pocket. Lys-284 provides a ligand contact to L-methionine.

Belongs to the AdoMet synthase family. As to quaternary structure, homotetramer; dimer of dimers. It depends on Mg(2+) as a cofactor. K(+) serves as cofactor.

The protein resides in the cytoplasm. It catalyses the reaction L-methionine + ATP + H2O = S-adenosyl-L-methionine + phosphate + diphosphate. Its pathway is amino-acid biosynthesis; S-adenosyl-L-methionine biosynthesis; S-adenosyl-L-methionine from L-methionine: step 1/1. In terms of biological role, catalyzes the formation of S-adenosylmethionine (AdoMet) from methionine and ATP. The overall synthetic reaction is composed of two sequential steps, AdoMet formation and the subsequent tripolyphosphate hydrolysis which occurs prior to release of AdoMet from the enzyme. The chain is S-adenosylmethionine synthase from Bacillus thuringiensis subsp. konkukian (strain 97-27).